The following is a 570-amino-acid chain: Proline--tRNA ligase (570 aa).

The protein belongs to the class-II aminoacyl-tRNA synthetase family. ProS type 1 subfamily. As to quaternary structure, homodimer.

The protein localises to the cytoplasm. The enzyme catalyses tRNA(Pro) + L-proline + ATP = L-prolyl-tRNA(Pro) + AMP + diphosphate. In terms of biological role, catalyzes the attachment of proline to tRNA(Pro) in a two-step reaction: proline is first activated by ATP to form Pro-AMP and then transferred to the acceptor end of tRNA(Pro). As ProRS can inadvertently accommodate and process non-cognate amino acids such as alanine and cysteine, to avoid such errors it has two additional distinct editing activities against alanine. One activity is designated as 'pretransfer' editing and involves the tRNA(Pro)-independent hydrolysis of activated Ala-AMP. The other activity is designated 'posttransfer' editing and involves deacylation of mischarged Ala-tRNA(Pro). The misacylated Cys-tRNA(Pro) is not edited by ProRS. The protein is Proline--tRNA ligase of Wolinella succinogenes (strain ATCC 29543 / DSM 1740 / CCUG 13145 / JCM 31913 / LMG 7466 / NCTC 11488 / FDC 602W) (Vibrio succinogenes).